A 431-amino-acid chain; its full sequence is NADH-quinone oxidoreductase chain 1 (431 aa).

NAD(+) is bound at residue 54–63 (GRGGAGFPTG). Residue 167–214 (GAGAYICGEETALLESLEGKKGMPRMKPPFPAGAGLYGCPTTVNNVES) coordinates FMN. Residues Cys-346, Cys-349, Cys-352, and Cys-392 each contribute to the [4Fe-4S] cluster site.

It belongs to the complex I 51 kDa subunit family. NDH-1 is composed of at least 14 different subunits, Nqo1 to Nqo14. The complex has a L-shaped structure, with the hydrophobic arm (subunits Nqo7, Nqo8, Nqo10 to Nqo14) embedded in the inner membrane and the hydrophilic peripheral arm (subunits Nqo1 to Nqo6, Nqo9) protruding into the bacterial cytoplasm. The hydrophilic domain contains all the redox centers. It depends on FMN as a cofactor. [4Fe-4S] cluster is required as a cofactor.

Its subcellular location is the cell inner membrane. The catalysed reaction is a quinone + NADH + 5 H(+)(in) = a quinol + NAD(+) + 4 H(+)(out). In terms of biological role, NDH-1 shuttles electrons from NADH, via FMN and iron-sulfur (Fe-S) centers, to quinones in the respiratory chain. The immediate electron acceptor for the enzyme in this species is believed to be ubiquinone. Couples the redox reaction to proton translocation (for every two electrons transferred, four hydrogen ions are translocated across the cytoplasmic membrane), and thus conserves the redox energy in a proton gradient. This Paracoccus denitrificans protein is NADH-quinone oxidoreductase chain 1 (nqo1).